Consider the following 206-residue polypeptide: Insecticyanin-B (206 aa).

An N-terminal signal peptide occupies residues 1-17 (MQRFLVFTIVAVATAAA). 2 disulfide bridges follow: Cys-26-Cys-136 and Cys-60-Cys-192.

Belongs to the calycin superfamily. Lipocalin family. In terms of assembly, homotetramer. Synthesized only in the caterpillars, apparently by the epidermis and secreted into the hemolymph. The protein is passed over from the larval hemolymph to that of pupae and adults and is sequestered in the eggs.

The protein localises to the secreted. Functionally, this protein binds a chromophore: biliverdin IX, isomer gamma. Mixed with lipoprotein-bound carotenes, this blue protein provides hornworms with their green cryptic coloration which serves a camouflage. The polypeptide is Insecticyanin-B (INSB) (Manduca sexta (Tobacco hawkmoth)).